Consider the following 288-residue polypeptide: 4-hydroxy-tetrahydrodipicolinate synthase (288 aa).

A pyruvate-binding site is contributed by Thr-47. Catalysis depends on Tyr-136, which acts as the Proton donor/acceptor. Lys-164 serves as the catalytic Schiff-base intermediate with substrate. Ile-204 contributes to the pyruvate binding site.

Belongs to the DapA family. As to quaternary structure, homotetramer; dimer of dimers.

The protein localises to the cytoplasm. The catalysed reaction is L-aspartate 4-semialdehyde + pyruvate = (2S,4S)-4-hydroxy-2,3,4,5-tetrahydrodipicolinate + H2O + H(+). It functions in the pathway amino-acid biosynthesis; L-lysine biosynthesis via DAP pathway; (S)-tetrahydrodipicolinate from L-aspartate: step 3/4. Catalyzes the condensation of (S)-aspartate-beta-semialdehyde [(S)-ASA] and pyruvate to 4-hydroxy-tetrahydrodipicolinate (HTPA). The chain is 4-hydroxy-tetrahydrodipicolinate synthase from Leuconostoc mesenteroides subsp. mesenteroides (strain ATCC 8293 / DSM 20343 / BCRC 11652 / CCM 1803 / JCM 6124 / NCDO 523 / NBRC 100496 / NCIMB 8023 / NCTC 12954 / NRRL B-1118 / 37Y).